Here is a 252-residue protein sequence, read N- to C-terminus: Indole-3-glycerol phosphate synthase (252 aa).

It belongs to the TrpC family.

It carries out the reaction 1-(2-carboxyphenylamino)-1-deoxy-D-ribulose 5-phosphate + H(+) = (1S,2R)-1-C-(indol-3-yl)glycerol 3-phosphate + CO2 + H2O. It functions in the pathway amino-acid biosynthesis; L-tryptophan biosynthesis; L-tryptophan from chorismate: step 4/5. The protein is Indole-3-glycerol phosphate synthase of Bacillus licheniformis (strain ATCC 14580 / DSM 13 / JCM 2505 / CCUG 7422 / NBRC 12200 / NCIMB 9375 / NCTC 10341 / NRRL NRS-1264 / Gibson 46).